A 472-amino-acid chain; its full sequence is ATP synthase subunit beta (472 aa).

Position 157 to 164 (157 to 164 (GGAGVGKT)) interacts with ATP.

Belongs to the ATPase alpha/beta chains family. F-type ATPases have 2 components, CF(1) - the catalytic core - and CF(0) - the membrane proton channel. CF(1) has five subunits: alpha(3), beta(3), gamma(1), delta(1), epsilon(1). CF(0) has three main subunits: a(1), b(2) and c(9-12). The alpha and beta chains form an alternating ring which encloses part of the gamma chain. CF(1) is attached to CF(0) by a central stalk formed by the gamma and epsilon chains, while a peripheral stalk is formed by the delta and b chains.

Its subcellular location is the cell inner membrane. It carries out the reaction ATP + H2O + 4 H(+)(in) = ADP + phosphate + 5 H(+)(out). Produces ATP from ADP in the presence of a proton gradient across the membrane. The catalytic sites are hosted primarily by the beta subunits. This Desulfatibacillum aliphaticivorans protein is ATP synthase subunit beta.